The chain runs to 229 residues: Putative N-acetylmannosamine-6-phosphate 2-epimerase (229 aa).

Belongs to the NanE family.

The catalysed reaction is an N-acyl-D-glucosamine 6-phosphate = an N-acyl-D-mannosamine 6-phosphate. It functions in the pathway amino-sugar metabolism; N-acetylneuraminate degradation; D-fructose 6-phosphate from N-acetylneuraminate: step 3/5. Its function is as follows. Converts N-acetylmannosamine-6-phosphate (ManNAc-6-P) to N-acetylglucosamine-6-phosphate (GlcNAc-6-P). The polypeptide is Putative N-acetylmannosamine-6-phosphate 2-epimerase (Pediococcus pentosaceus (strain ATCC 25745 / CCUG 21536 / LMG 10740 / 183-1w)).